Reading from the N-terminus, the 626-residue chain is Chaperone protein HtpG (626 aa).

Residues 1–332 (MTNNDTPGMR…TEDLPLNVSR (332 aa)) are a; substrate-binding. Residues 333 to 546 (EVVQSSKVMA…KDSLDSSMEK (214 aa)) are b. The segment at 547-626 (MMKMMHAEMP…ELIEAATMSR (80 aa)) is c.

It belongs to the heat shock protein 90 family. In terms of assembly, homodimer.

The protein resides in the cytoplasm. In terms of biological role, molecular chaperone. Has ATPase activity. The protein is Chaperone protein HtpG of Chlorobium phaeobacteroides (strain DSM 266 / SMG 266 / 2430).